A 62-amino-acid chain; its full sequence is Metallothionein-4 (62 aa).

20 residues coordinate a divalent metal cation: Cys-6, Cys-8, Cys-14, Cys-16, Cys-20, Cys-22, Cys-25, Cys-27, Cys-30, Cys-34, Cys-35, Cys-37, Cys-38, Cys-42, Cys-45, Cys-49, Cys-51, Cys-58, Cys-60, and Cys-61.

The protein belongs to the metallothionein superfamily. Type 1 family. As to expression, expressed exclusively in stratified squamous epithelia associated with oral epithelia, esophagus, upper stomach, tail, footpads and neonatal skin.

In terms of biological role, seems to bind zinc and copper. Could play a special role in regulating zinc metabolism during the differentiation of stratified epithelia. This Mus musculus (Mouse) protein is Metallothionein-4 (Mt4).